The primary structure comprises 690 residues: UvrABC system protein B (690 aa).

Residues 30–188 enclose the Helicase ATP-binding domain; the sequence is QGVMDGQTNQ…QELISLHFVR (159 aa). An ATP-binding site is contributed by 43 to 50; it reads GVTGSGKT. Residues 96-119 carry the Beta-hairpin motif; sequence YYDFYQPEAYIPTMDKYIAKDLKI. A Helicase C-terminal domain is found at 435–601; the sequence is QIDDLLEEIR…SIVKSVDQVL (167 aa). A UVR domain is found at 641–676; that stretch reads YAMAEELRLEMQEAAESMEFEKAAYLRDEVTKLEDA.

This sequence belongs to the UvrB family. In terms of assembly, forms a heterotetramer with UvrA during the search for lesions. Interacts with UvrC in an incision complex.

The protein localises to the cytoplasm. Functionally, the UvrABC repair system catalyzes the recognition and processing of DNA lesions. A damage recognition complex composed of 2 UvrA and 2 UvrB subunits scans DNA for abnormalities. Upon binding of the UvrA(2)B(2) complex to a putative damaged site, the DNA wraps around one UvrB monomer. DNA wrap is dependent on ATP binding by UvrB and probably causes local melting of the DNA helix, facilitating insertion of UvrB beta-hairpin between the DNA strands. Then UvrB probes one DNA strand for the presence of a lesion. If a lesion is found the UvrA subunits dissociate and the UvrB-DNA preincision complex is formed. This complex is subsequently bound by UvrC and the second UvrB is released. If no lesion is found, the DNA wraps around the other UvrB subunit that will check the other stand for damage. The chain is UvrABC system protein B from Chlorobium phaeobacteroides (strain BS1).